The chain runs to 582 residues: Zinc finger protein somi-1 (582 aa).

2 disordered regions span residues 179 to 251 (LRPE…NNTD) and 352 to 377 (SAEP…KKEQ). The segment covering 188–226 (TQKSTNGVHRSTSNSSAETLRNNSVSAATVSPSDDNSLN) has biased composition (polar residues). A compositionally biased stretch (low complexity) spans 227-244 (SPALTSSGSAGSGTPPLG). Basic and acidic residues predominate over residues 352–368 (SAEPMKRHRVEAHEKQS). The C2H2-type; Degenerate zinc-finger motif lies at 454 to 477 (YICEDCDFVTVYKGNMKRHLNTCH). Residues 513–582 (AHKANSSRGR…PPPPPPPMLL (70 aa)) are disordered. The segment covering 551–570 (LLESLASSSSSMGGYSNGNN) has biased composition (low complexity). Positions 572-582 (QPPPPPPPMLL) are enriched in pro residues.

In terms of assembly, may interact with swsn-9; the interaction promotes hypodermal differentiation. Expressed in hypodermal seam cells, the somatic gonad and vulval precursor cells, body wall muscle and head neurons.

It is found in the nucleus. In terms of biological role, DNA-binding protein which binds to the promoters of let-60, lin-14 and lin-28, possibly to regulate genes involved in hypodermal and vulval development. Together with miRNAs mir-84 and let-7 may direct terminal differentiation of the seam cells, exit from the molting cycle, and vulva formation. Does not regulate the expression of mir-84. May promote hypodermal differentiation in association with swsn-9, a component of SWI/SNF chromatin remodeling complexes. In Caenorhabditis elegans, this protein is Zinc finger protein somi-1.